Consider the following 493-residue polypeptide: Alpha-amylase-related protein (493 aa).

The signal sequence occupies residues 1–19 (MFKFALTLTLCLAGSLSLA). A Pyrrolidone carboxylic acid modification is found at Q20. A disulfide bridge links C47 with C103. Residues N117, Q168, and D177 each coordinate Ca(2+). Cysteines 156 and 170 form a disulfide. R205 serves as a coordination point for chloride. D207 serves as the catalytic Nucleophile. Ca(2+) is bound at residue H211. Catalysis depends on E244, which acts as the Proton donor. The chloride site is built by N307 and R342. 3 disulfide bridges follow: C375/C381, C417/C440, and C447/C459.

It belongs to the glycosyl hydrolase 13 family. Monomer. The cofactor is Ca(2+). Chloride is required as a cofactor.

The protein resides in the secreted. The catalysed reaction is Endohydrolysis of (1-&gt;4)-alpha-D-glucosidic linkages in polysaccharides containing three or more (1-&gt;4)-alpha-linked D-glucose units.. The protein is Alpha-amylase-related protein (Amyrel) of Drosophila simulans (Fruit fly).